Consider the following 491-residue polypeptide: Peptidyl-prolyl isomerase CWC27 (491 aa).

The 157-residue stretch at 11-167 (TNGKVIIDTT…IPPKIRRIHI (157 aa)) folds into the PPIase cyclophilin-type domain. 3 stretches are compositionally biased toward basic and acidic residues: residues 186–202 (AQQKAKLEAKKDMEQRE), 268–298 (DLGKSRENEASEEKKAVDLKNIRAQHEREKA), and 306–316 (AEIKRMEEDLR). Disordered stretches follow at residues 186–427 (AQQK…IEVD) and 464–491 (RDLLGKPDKKKLKGNPNRRTVRNSGRNR). The stretch at 277–327 (ASEEKKAVDLKNIRAQHEREKAGGSAARQAEIKRMEEDLRRLKKRSGSVSD) forms a coiled coil. Positions 323–333 (GSVSDSESDSS) are enriched in low complexity. The segment covering 352-367 (ASKRGRAAMKAGNKRG) has biased composition (basic residues). Composition is skewed to acidic residues over residues 391–406 (DEPEEEQAEEIEEGEA) and 418–427 (AEEEGGIEVD). Positions 482–491 (RTVRNSGRNR) are enriched in basic residues.

It belongs to the cyclophilin-type PPIase family. CWC27 subfamily. Associated with the spliceosome.

It is found in the cytoplasm. The protein resides in the nucleus. The enzyme catalyses [protein]-peptidylproline (omega=180) = [protein]-peptidylproline (omega=0). Functionally, PPIases accelerate the folding of proteins. It catalyzes the cis-trans isomerization of proline imidic peptide bonds in oligopeptides. Involved in pre-mRNA splicing. In Cryptococcus neoformans var. neoformans serotype D (strain B-3501A) (Filobasidiella neoformans), this protein is Peptidyl-prolyl isomerase CWC27 (CWC27).